The following is a 169-amino-acid chain: Der GTPase-activating protein YihI (169 aa).

Disordered regions lie at residues 1 to 92 (MKPS…EKPM) and 146 to 169 (SYDD…LRGN). A compositionally biased stretch (basic residues) spans 10-19 (SKGHAKARRK). A compositionally biased stretch (basic and acidic residues) spans 20–30 (TREELDQEARD). The segment covering 31-40 (RKRQKKRRGH) has biased composition (basic residues). Over residues 49–58 (GNTTSGSKGQ) the composition is skewed to polar residues. A compositionally biased stretch (acidic residues) spans 147 to 159 (YDDDEEEEEDEKQ). A compositionally biased stretch (basic and acidic residues) spans 160 to 169 (EDMMRLLRGN).

It belongs to the YihI family. In terms of assembly, interacts with Der.

A GTPase-activating protein (GAP) that modifies Der/EngA GTPase function. May play a role in ribosome biogenesis. The sequence is that of Der GTPase-activating protein YihI from Escherichia coli O1:K1 / APEC.